A 207-amino-acid chain; its full sequence is Holliday junction branch migration complex subunit RuvA (207 aa).

Residues 1 to 65 form a domain I region; sequence MYDYIRGTLT…ETEHLLYGFH (65 aa). The segment at 66–144 is domain II; the sequence is SREERECFRI…DLLPLDSRVE (79 aa). Residues 145-150 form a flexible linker region; it reads TSQTHT. Residues 150-207 form a domain III region; that stretch reads TTSSCLEEGIQALAALGYSKIAAERMIAEAIKDLPEGSSLTDILPIALKKNFSGVNKD.

It belongs to the RuvA family. Homotetramer. Forms an RuvA(8)-RuvB(12)-Holliday junction (HJ) complex. HJ DNA is sandwiched between 2 RuvA tetramers; dsDNA enters through RuvA and exits via RuvB. An RuvB hexamer assembles on each DNA strand where it exits the tetramer. Each RuvB hexamer is contacted by two RuvA subunits (via domain III) on 2 adjacent RuvB subunits; this complex drives branch migration. In the full resolvosome a probable DNA-RuvA(4)-RuvB(12)-RuvC(2) complex forms which resolves the HJ.

Its subcellular location is the cytoplasm. Its function is as follows. The RuvA-RuvB-RuvC complex processes Holliday junction (HJ) DNA during genetic recombination and DNA repair, while the RuvA-RuvB complex plays an important role in the rescue of blocked DNA replication forks via replication fork reversal (RFR). RuvA specifically binds to HJ cruciform DNA, conferring on it an open structure. The RuvB hexamer acts as an ATP-dependent pump, pulling dsDNA into and through the RuvAB complex. HJ branch migration allows RuvC to scan DNA until it finds its consensus sequence, where it cleaves and resolves the cruciform DNA. The chain is Holliday junction branch migration complex subunit RuvA from Chlamydia pneumoniae (Chlamydophila pneumoniae).